The chain runs to 205 residues: Large ribosomal subunit protein uL4 (205 aa).

Residues 43–78 form a disordered region; sequence ARAGTKAQKTRSEVAGGGKKPWRQKGTGNARAGTIR.

The protein belongs to the universal ribosomal protein uL4 family. As to quaternary structure, part of the 50S ribosomal subunit.

Functionally, one of the primary rRNA binding proteins, this protein initially binds near the 5'-end of the 23S rRNA. It is important during the early stages of 50S assembly. It makes multiple contacts with different domains of the 23S rRNA in the assembled 50S subunit and ribosome. In terms of biological role, forms part of the polypeptide exit tunnel. This Halorhodospira halophila (strain DSM 244 / SL1) (Ectothiorhodospira halophila (strain DSM 244 / SL1)) protein is Large ribosomal subunit protein uL4.